We begin with the raw amino-acid sequence, 158 residues long: Cytosine deaminase (158 aa).

The CMP/dCMP-type deaminase domain maps to 9–129 (KWDQKGMDIA…KYLQTRGHEV (121 aa)). Asparagine 51 is a binding site for substrate. Histidine 62 is a Zn(2+) binding site. The active-site Proton donor is the glutamate 64. Cysteine 91 and cysteine 94 together coordinate Zn(2+). Aspartate 155 lines the substrate pocket.

Belongs to the cytidine and deoxycytidylate deaminase family. As to quaternary structure, homodimer. Zn(2+) serves as cofactor.

It localises to the cytoplasm. The protein resides in the nucleus. The catalysed reaction is cytosine + H2O + H(+) = uracil + NH4(+). It functions in the pathway pyrimidine metabolism; UMP biosynthesis via salvage pathway; uracil from cytosine: step 1/1. Catalyzes the hydrolytic deamination of cytosine to uracil or 5-methylcytosine to thymine. Is involved in the pyrimidine salvage pathway, which allows the cell to utilize cytosine for pyrimidine nucleotide synthesis. This chain is Cytosine deaminase, found in Saccharomyces cerevisiae (strain ATCC 204508 / S288c) (Baker's yeast).